Reading from the N-terminus, the 311-residue chain is Aspartate carbamoyltransferase catalytic subunit (311 aa).

Positions 55 and 56 each coordinate carbamoyl phosphate. K85 contacts L-aspartate. Carbamoyl phosphate-binding residues include R106, H135, and Q138. 2 residues coordinate L-aspartate: R168 and R230. L268 and P269 together coordinate carbamoyl phosphate.

Belongs to the aspartate/ornithine carbamoyltransferase superfamily. ATCase family. As to quaternary structure, heterododecamer (2C3:3R2) of six catalytic PyrB chains organized as two trimers (C3), and six regulatory PyrI chains organized as three dimers (R2).

The catalysed reaction is carbamoyl phosphate + L-aspartate = N-carbamoyl-L-aspartate + phosphate + H(+). Its pathway is pyrimidine metabolism; UMP biosynthesis via de novo pathway; (S)-dihydroorotate from bicarbonate: step 2/3. Functionally, catalyzes the condensation of carbamoyl phosphate and aspartate to form carbamoyl aspartate and inorganic phosphate, the committed step in the de novo pyrimidine nucleotide biosynthesis pathway. The protein is Aspartate carbamoyltransferase catalytic subunit of Baumannia cicadellinicola subsp. Homalodisca coagulata.